Consider the following 468-residue polypeptide: Protein ABHD15 (468 aa).

An N-terminal signal peptide occupies residues 1–23 (MPPWGAALALILAVLALLGLLGP). Residues 33-61 (VGERTLPGAQDRDDGEEADGGGPADQFSD) form a disordered region. Active-site charge relay system residues include D360 and H391. S434 bears the Phosphoserine mark.

It belongs to the AB hydrolase superfamily. AB hydrolase 4 family. As to quaternary structure, interacts with PDE3B; this interaction regulates PDE3B's stability and expression and, thereby, impacts the antilipolytic action of insulin.

The protein localises to the secreted. Its function is as follows. May regulate adipocyte lipolysis and liver lipid accumulation. This Homo sapiens (Human) protein is Protein ABHD15.